The sequence spans 478 residues: MWLAAAAPSLARRLLFLGPPPPPLLLLVFSRSSRRRLHSLGLAAMPEKRPFERLPADVSPINCSLCLKPDLLDFTFEGKLEAAAQVRQATNQIVMNCADIDIITASYAPEGDEEIHATGFNYQNEDEKVTLSFPSTLQTGTGTLKIDFVGELNDKMKGFYRSKYTTPSGEVRYAAVTQFEATDARRAFPCWDERAIKATFDISLVVPKDRVALSNMNVIDRKPYPDDENLVEVKFARTPVTSTYLVAFVVGEYDFVETRSKDGVCVCVYTPVGKAEQGKFALEVAAKTLPFYKDYFNVPYPLPKIDLIAIADFAAGAMENWDLVTYRETALLIDPKNSCSSSRQWVALVVGHELAHQWFGNLVTMEWWTHLRLNEGFASWIEYLCVDHCFPEYDIWTQFVSADYTRAQELDALDNSHPIEVSVGHPSEVDEIFDAISYSKGASVIRMLHDYIGDKDFKKGMNMYLTKFQQKNAAAGNL.

Substrate contacts are provided by residues Glu-180 and 316-320; that span reads GAMEN. His-352 serves as a coordination point for Zn(2+). Glu-353 acts as the Proton acceptor in catalysis. 2 residues coordinate Zn(2+): His-356 and Glu-375.

Belongs to the peptidase M1 family. Zn(2+) serves as cofactor.

In terms of biological role, aminopeptidase with broad substrate specificity to several peptides. The chain is Puromycin-sensitive aminopeptidase-like protein (NPEPPSL1) from Homo sapiens (Human).